Here is a 427-residue protein sequence, read N- to C-terminus: Gamma-glutamyl phosphate reductase (427 aa).

Belongs to the gamma-glutamyl phosphate reductase family.

The protein localises to the cytoplasm. The enzyme catalyses L-glutamate 5-semialdehyde + phosphate + NADP(+) = L-glutamyl 5-phosphate + NADPH + H(+). It participates in amino-acid biosynthesis; L-proline biosynthesis; L-glutamate 5-semialdehyde from L-glutamate: step 2/2. Its function is as follows. Catalyzes the NADPH-dependent reduction of L-glutamate 5-phosphate into L-glutamate 5-semialdehyde and phosphate. The product spontaneously undergoes cyclization to form 1-pyrroline-5-carboxylate. The protein is Gamma-glutamyl phosphate reductase of Anaeromyxobacter sp. (strain K).